We begin with the raw amino-acid sequence, 394 residues long: E3 ubiquitin-protein ligase RNF149 (394 aa).

An N-terminal signal peptide occupies residues 1 to 31 (MAARRRPAAGVGARDALAVLALALCTPGVGG). Residues N51 and N141 are each glycosylated (N-linked (GlcNAc...) asparagine). One can recognise a PA domain in the interval 66 to 171 (SSLREERQGL…PKGREIFDLV (106 aa)). The chain crosses the membrane as a helical span at residues 197–217 (VVFVAIAFITMMIISLAWLIF). The segment at 265–306 (CAVCIENFKVKDVIRILPCKHIFHRICIDPWLLDHRTCPMCK) adopts an RING-type; atypical zinc-finger fold. Residues 321–394 (DTQELPTPEA…SEPQHGGSIC (74 aa)) are disordered. Phosphothreonine is present on T327. Residue N339 is glycosylated (N-linked (GlcNAc...) asparagine). Phosphoserine is present on residues S341 and S344. A compositionally biased stretch (low complexity) spans 352 to 362 (SNLPSSSSSES).

The protein resides in the membrane. It carries out the reaction S-ubiquitinyl-[E2 ubiquitin-conjugating enzyme]-L-cysteine + [acceptor protein]-L-lysine = [E2 ubiquitin-conjugating enzyme]-L-cysteine + N(6)-ubiquitinyl-[acceptor protein]-L-lysine.. It functions in the pathway protein modification; protein ubiquitination. Functionally, E3 ubiquitin-protein ligase. Ubiquitinates BRAF, inducing its proteasomal degradation. The protein is E3 ubiquitin-protein ligase RNF149 (Rnf149) of Mus musculus (Mouse).